Here is a 126-residue protein sequence, read N- to C-terminus: Large ribosomal subunit protein bL12 (126 aa).

The protein belongs to the bacterial ribosomal protein bL12 family. Homodimer. Part of the ribosomal stalk of the 50S ribosomal subunit. Forms a multimeric L10(L12)X complex, where L10 forms an elongated spine to which 2 to 4 L12 dimers bind in a sequential fashion. Binds GTP-bound translation factors.

In terms of biological role, forms part of the ribosomal stalk which helps the ribosome interact with GTP-bound translation factors. Is thus essential for accurate translation. The chain is Large ribosomal subunit protein bL12 from Nitrosococcus oceani (strain ATCC 19707 / BCRC 17464 / JCM 30415 / NCIMB 11848 / C-107).